We begin with the raw amino-acid sequence, 412 residues long: Serine hydroxymethyltransferase (412 aa).

Residues L116 and 120–122 (GHL) contribute to the (6S)-5,6,7,8-tetrahydrofolate site. K225 carries the N6-(pyridoxal phosphate)lysine modification. Residues E241 and 350–352 (SPF) each bind (6S)-5,6,7,8-tetrahydrofolate.

The protein belongs to the SHMT family. As to quaternary structure, homodimer. Requires pyridoxal 5'-phosphate as cofactor.

It localises to the cytoplasm. The catalysed reaction is (6R)-5,10-methylene-5,6,7,8-tetrahydrofolate + glycine + H2O = (6S)-5,6,7,8-tetrahydrofolate + L-serine. It participates in one-carbon metabolism; tetrahydrofolate interconversion. It functions in the pathway amino-acid biosynthesis; glycine biosynthesis; glycine from L-serine: step 1/1. Functionally, catalyzes the reversible interconversion of serine and glycine with tetrahydrofolate (THF) serving as the one-carbon carrier. This reaction serves as the major source of one-carbon groups required for the biosynthesis of purines, thymidylate, methionine, and other important biomolecules. Also exhibits THF-independent aldolase activity toward beta-hydroxyamino acids, producing glycine and aldehydes, via a retro-aldol mechanism. The sequence is that of Serine hydroxymethyltransferase from Enterococcus faecalis (strain ATCC 700802 / V583).